The chain runs to 495 residues: Putative aldehyde dehydrogenase AldA (495 aa).

212–218 (GKGSESG) lines the NAD(+) pocket. Catalysis depends on residues E256 and C290.

It belongs to the aldehyde dehydrogenase family.

The catalysed reaction is an aldehyde + NAD(+) + H2O = a carboxylate + NADH + 2 H(+). This Staphylococcus aureus (strain MSSA476) protein is Putative aldehyde dehydrogenase AldA (aldA).